Consider the following 461-residue polypeptide: Argininosuccinate lyase (461 aa).

The protein belongs to the lyase 1 family. Argininosuccinate lyase subfamily.

The protein localises to the cytoplasm. It carries out the reaction 2-(N(omega)-L-arginino)succinate = fumarate + L-arginine. Its pathway is amino-acid biosynthesis; L-arginine biosynthesis; L-arginine from L-ornithine and carbamoyl phosphate: step 3/3. The sequence is that of Argininosuccinate lyase from Chlorobium luteolum (strain DSM 273 / BCRC 81028 / 2530) (Pelodictyon luteolum).